Reading from the N-terminus, the 35-residue chain is Sorbin and SH3 domain-containing protein 1 (35 aa).

The SoHo domain maps to 1–8 (LNRDDDSD). S15 carries the phosphoserine modification. The SH3 domain occupies 22–35 (CDDGWFVGTSRRTK).

Interacts with the long isoform of AFDN and with VCL. AFDN and VCL bind to SORBS1 in a competitive manner and do not form a ternary complex. Interacts with ABL1, CBL, CBLB and INPPL1/SHIP2 through the third SH3 domain. Interaction with ABL1 occurs only after insulin stimulation while this has no effect on the interaction with INPPL1. Interacts with the insulin receptor but dissociates from it following insulin stimulation. Also interacts with SCA7, PTK2/FAK1 and flotillin. Interacts (via SH3 domain 2) with PXN. Interacts (via third SH3 domain) with the Ten-1 ICD form of TENM1; the interaction induces the translocation of SORBS1 to the nucleus. O-glycosylated.

The protein resides in the cell junction. It is found in the adherens junction. It localises to the cell membrane. Its subcellular location is the cytoplasm. The protein localises to the cytoskeleton. The protein resides in the focal adhesion. It is found in the nucleus. It localises to the nucleus matrix. Its function is as follows. Plays a role in tyrosine phosphorylation of CBL by linking CBL to the insulin receptor. Required for insulin-stimulated glucose transport. Involved in formation of actin stress fibers and focal adhesions. The protein is Sorbin and SH3 domain-containing protein 1 of Rattus norvegicus (Rat).